The primary structure comprises 435 residues: Galactose/lactose metabolism regulatory protein GAL80 (435 aa).

N-acetylmethionine is present on Met-1.

This sequence to K.lactis GAL80. In terms of assembly, monomer.

This protein is a negative regulator for the gene expression of the lactose/galactose metabolic genes. It binds to GAL4 and so blocks transcriptional activation by it, in the absence of an inducing sugar. This Saccharomyces cerevisiae (strain ATCC 204508 / S288c) (Baker's yeast) protein is Galactose/lactose metabolism regulatory protein GAL80 (GAL80).